Here is a 97-residue protein sequence, read N- to C-terminus: MTDLRHYDVIVSPSITEKSTLVSEQNQVVFNVAKGASKPEIKAAVEALFGVKVTAVNTLVRKGKLKRFRGFAGKQKDVKKAIITLAEGQSIDVSTGL.

The protein belongs to the universal ribosomal protein uL23 family. In terms of assembly, part of the 50S ribosomal subunit. Contacts protein L29, and trigger factor when it is bound to the ribosome.

One of the early assembly proteins it binds 23S rRNA. One of the proteins that surrounds the polypeptide exit tunnel on the outside of the ribosome. Forms the main docking site for trigger factor binding to the ribosome. This chain is Large ribosomal subunit protein uL23, found in Sinorhizobium fredii (strain NBRC 101917 / NGR234).